A 717-amino-acid chain; its full sequence is Glycine--tRNA ligase beta subunit (717 aa).

It belongs to the class-II aminoacyl-tRNA synthetase family. As to quaternary structure, tetramer of two alpha and two beta subunits.

It is found in the cytoplasm. The catalysed reaction is tRNA(Gly) + glycine + ATP = glycyl-tRNA(Gly) + AMP + diphosphate. The polypeptide is Glycine--tRNA ligase beta subunit (Agrobacterium fabrum (strain C58 / ATCC 33970) (Agrobacterium tumefaciens (strain C58))).